A 353-amino-acid chain; its full sequence is Histidinol-phosphate aminotransferase (353 aa).

The residue at position 214 (Lys214) is an N6-(pyridoxal phosphate)lysine.

It belongs to the class-II pyridoxal-phosphate-dependent aminotransferase family. Histidinol-phosphate aminotransferase subfamily. Homodimer. It depends on pyridoxal 5'-phosphate as a cofactor.

It catalyses the reaction L-histidinol phosphate + 2-oxoglutarate = 3-(imidazol-4-yl)-2-oxopropyl phosphate + L-glutamate. The protein operates within amino-acid biosynthesis; L-histidine biosynthesis; L-histidine from 5-phospho-alpha-D-ribose 1-diphosphate: step 7/9. The sequence is that of Histidinol-phosphate aminotransferase from Gloeobacter violaceus (strain ATCC 29082 / PCC 7421).